Reading from the N-terminus, the 228-residue chain is Cytidylate kinase (228 aa).

11–19 (GPASAGKST) is an ATP binding site.

It belongs to the cytidylate kinase family. Type 1 subfamily.

The protein resides in the cytoplasm. It catalyses the reaction CMP + ATP = CDP + ADP. The enzyme catalyses dCMP + ATP = dCDP + ADP. The polypeptide is Cytidylate kinase (Limosilactobacillus reuteri (strain DSM 20016) (Lactobacillus reuteri)).